We begin with the raw amino-acid sequence, 1020 residues long: 26S proteasome non-ATPase regulatory subunit 1 (1020 aa).

The interval 279–322 (TALPSTFKPQGTTSEDGAKSEGDKSKSDEDITEETPADDKVERT) is disordered. Residues 281–293 (LPSTFKPQGTTSE) are compositionally biased toward polar residues. Threonine 291 is subject to Phosphothreonine. A compositionally biased stretch (basic and acidic residues) spans 294 to 307 (DGAKSEGDKSKSDE). Phosphoserine is present on residues serine 298, serine 303, and serine 305. Threonine 310 is modified (phosphothreonine). PC repeat units lie at residues 418–452 (TATA…SSGY), 456–489 (GALY…ENVR), 491–525 (GGCL…VTGE), 526–560 (AAGI…EKIL), 562–595 (GLAV…VLRR), 596–631 (SGMY…DVRR), 632–664 (AAVT…PHVR), 666–701 (GAAM…FVRQ), 702–742 (GALI…DVMA), and 745–777 (GAIL…QAVV). 2 disordered regions span residues 855–950 (QKRR…NPAR) and 999–1020 (FGPM…YIED). Basic and acidic residues-rich tracts occupy residues 858–867 (RENADKKEDE) and 876–939 (KEGA…KEPE). The segment covering 1003–1020 (NDEEKEPEPPEPFEYIED) has biased composition (acidic residues).

This sequence belongs to the proteasome subunit S1 family.

Acts as a regulatory subunit of the 26S proteasome which is involved in the ATP-dependent degradation of ubiquitinated proteins. This chain is 26S proteasome non-ATPase regulatory subunit 1 (Rpn2), found in Drosophila melanogaster (Fruit fly).